The sequence spans 542 residues: GMP synthase [glutamine-hydrolyzing] (542 aa).

Positions 28–218 (IIVILDFGSQ…VYHICHCEPT (191 aa)) constitute a Glutamine amidotransferase type-1 domain. The active-site Nucleophile is C105. Catalysis depends on residues H192 and E194. The GMPS ATP-PPase domain maps to 219 to 417 (WTTAAFIEES…IGLPEEIVRR (199 aa)). An ATP-binding site is contributed by 246–252 (SGGVDSS).

As to quaternary structure, homodimer.

It carries out the reaction XMP + L-glutamine + ATP + H2O = GMP + L-glutamate + AMP + diphosphate + 2 H(+). It functions in the pathway purine metabolism; GMP biosynthesis; GMP from XMP (L-Gln route): step 1/1. Its function is as follows. Catalyzes the synthesis of GMP from XMP. This Synechocystis sp. (strain ATCC 27184 / PCC 6803 / Kazusa) protein is GMP synthase [glutamine-hydrolyzing] (guaA).